Reading from the N-terminus, the 251-residue chain is Probable transcriptional regulatory protein Cpar_0525 (251 aa).

The protein belongs to the TACO1 family.

It localises to the cytoplasm. This Chlorobaculum parvum (strain DSM 263 / NCIMB 8327) (Chlorobium vibrioforme subsp. thiosulfatophilum) protein is Probable transcriptional regulatory protein Cpar_0525.